A 195-amino-acid polypeptide reads, in one-letter code: Large ribosomal subunit protein uL5 (195 aa).

It belongs to the universal ribosomal protein uL5 family. As to quaternary structure, part of the 50S ribosomal subunit; part of the 5S rRNA/L5/L18/L25 subcomplex. Contacts the 5S rRNA and the P site tRNA. Forms a bridge to the 30S subunit in the 70S ribosome.

Its function is as follows. This is one of the proteins that bind and probably mediate the attachment of the 5S RNA into the large ribosomal subunit, where it forms part of the central protuberance. In the 70S ribosome it contacts protein S13 of the 30S subunit (bridge B1b), connecting the 2 subunits; this bridge is implicated in subunit movement. Contacts the P site tRNA; the 5S rRNA and some of its associated proteins might help stabilize positioning of ribosome-bound tRNAs. The sequence is that of Large ribosomal subunit protein uL5 from Chlorobium phaeobacteroides (strain DSM 266 / SMG 266 / 2430).